Here is a 600-residue protein sequence, read N- to C-terminus: Proline--tRNA ligase (600 aa).

Belongs to the class-II aminoacyl-tRNA synthetase family. ProS type 1 subfamily. In terms of assembly, homodimer.

The protein resides in the cytoplasm. It carries out the reaction tRNA(Pro) + L-proline + ATP = L-prolyl-tRNA(Pro) + AMP + diphosphate. Catalyzes the attachment of proline to tRNA(Pro) in a two-step reaction: proline is first activated by ATP to form Pro-AMP and then transferred to the acceptor end of tRNA(Pro). As ProRS can inadvertently accommodate and process non-cognate amino acids such as alanine and cysteine, to avoid such errors it has two additional distinct editing activities against alanine. One activity is designated as 'pretransfer' editing and involves the tRNA(Pro)-independent hydrolysis of activated Ala-AMP. The other activity is designated 'posttransfer' editing and involves deacylation of mischarged Ala-tRNA(Pro). The misacylated Cys-tRNA(Pro) is not edited by ProRS. This Gloeothece citriformis (strain PCC 7424) (Cyanothece sp. (strain PCC 7424)) protein is Proline--tRNA ligase.